Reading from the N-terminus, the 30-residue chain is Conopeptide Vi002 (30 aa).

Expressed by the venom gland.

The protein localises to the secreted. The polypeptide is Conopeptide Vi002 (Conus virgo (Virgin cone)).